A 1083-amino-acid polypeptide reads, in one-letter code: Kinesin-like protein klp-19 (1083 aa).

Positions 6-328 (SLRVVVRARP…LRYADRAKQI (323 aa)) constitute a Kinesin motor domain. 85–92 (GQTGSGKT) lines the ATP pocket. Residues 408–435 (MSALTQKNSRLEEDKAKLQSMLTDVRNT) are a coiled coil. Positions 458-471 (TEESTTLADDDNDE) are enriched in acidic residues. Positions 458–479 (TEESTTLADDDNDETALGGQDD) are disordered. Positions 487 to 650 (LPELQAELDD…KSKLQKREND (164 aa)) form a coiled coil. The segment covering 1044–1055 (DDSQPSPSNSTF) has biased composition (polar residues). The disordered stretch occupies residues 1044 to 1083 (DDSQPSPSNSTFVIGAAPTSEADGVPPIKRKSRRTDLGPL).

This sequence belongs to the TRAFAC class myosin-kinesin ATPase superfamily. Kinesin family. As to expression, expressed in the gonad.

Its subcellular location is the nucleus. The protein resides in the nucleoplasm. The protein localises to the cytoplasm. It is found in the cytoskeleton. It localises to the spindle. Its subcellular location is the chromosome. In terms of biological role, required for chromosome movement and orientation on spindle poles in mitosis and meiosis. May play a role in early anterior-posterior chromosome movement in mitotic embryos. This is Kinesin-like protein klp-19 from Caenorhabditis elegans.